The chain runs to 131 residues: Large ribosomal subunit protein bL12 (131 aa).

Belongs to the bacterial ribosomal protein bL12 family. As to quaternary structure, homodimer. Part of the ribosomal stalk of the 50S ribosomal subunit. Forms a multimeric L10(L12)X complex, where L10 forms an elongated spine to which 2 to 4 L12 dimers bind in a sequential fashion. Binds GTP-bound translation factors.

In terms of biological role, forms part of the ribosomal stalk which helps the ribosome interact with GTP-bound translation factors. Is thus essential for accurate translation. The protein is Large ribosomal subunit protein bL12 of Tropheryma whipplei (strain Twist) (Whipple's bacillus).